The chain runs to 196 residues: dITP/XTP pyrophosphatase (196 aa).

A substrate-binding site is contributed by 8–13 (TKNEGK). Mg(2+)-binding residues include Glu-41 and Asp-70. The active-site Proton acceptor is the Asp-70. Substrate contacts are provided by residues Ser-71, 153 to 156 (FGYD), Lys-176, and 181 to 182 (HR).

Belongs to the HAM1 NTPase family. As to quaternary structure, homodimer. Mg(2+) serves as cofactor.

The enzyme catalyses XTP + H2O = XMP + diphosphate + H(+). It catalyses the reaction dITP + H2O = dIMP + diphosphate + H(+). It carries out the reaction ITP + H2O = IMP + diphosphate + H(+). In terms of biological role, pyrophosphatase that catalyzes the hydrolysis of nucleoside triphosphates to their monophosphate derivatives, with a high preference for the non-canonical purine nucleotides XTP (xanthosine triphosphate), dITP (deoxyinosine triphosphate) and ITP. Seems to function as a house-cleaning enzyme that removes non-canonical purine nucleotides from the nucleotide pool, thus preventing their incorporation into DNA/RNA and avoiding chromosomal lesions. The chain is dITP/XTP pyrophosphatase from Bacillus licheniformis (strain ATCC 14580 / DSM 13 / JCM 2505 / CCUG 7422 / NBRC 12200 / NCIMB 9375 / NCTC 10341 / NRRL NRS-1264 / Gibson 46).